The chain runs to 382 residues: Mucosal addressin cell adhesion molecule 1 (382 aa).

The first 18 residues, 1-18 (MDFGLALLLAGLLGLLLG), serve as a signal peptide directing secretion. Residues 19–317 (QSLQVKPLQV…TGSSKPAGDQ (299 aa)) lie on the Extracellular side of the membrane. Ig-like domains are found at residues 23 to 112 (VKPL…LLVY) and 113 to 231 (AFPD…TSPE). 3 cysteine pairs are disulfide-bonded: cysteine 47–cysteine 94, cysteine 51–cysteine 98, and cysteine 134–cysteine 204. N-linked (GlcNAc...) asparagine glycosylation is present at asparagine 83. A disordered region spans residues 223 to 314 (VLHSPTSPEP…VIPTGSSKPA (92 aa)). Residues 226-317 (SPTSPEPPDT…TGSSKPAGDQ (92 aa)) form a mucin-like region. The stretch at 228-231 (TSPE) is one 1; truncated repeat. The segment at 228–271 (TSPEPPDTTSPESPDTTSPESPDTTSQEPPDTTSPEPPDKTSPE) is 5.5 X 8 AA tandem repeats of [PS]-P-D-T-T-S-[QP]-E. A run of 5 repeats spans residues 232–239 (PPDTTSPE), 240–247 (SPDTTSPE), 248–255 (SPDTTSQE), 256–263 (PPDTTSPE), and 264–271 (PPDKTSPE). Over residues 236 to 261 (TSPESPDTTSPESPDTTSQEPPDTTS) the composition is skewed to low complexity. The span at 277–288 (GSTHTPRSPGST) shows a compositional bias: low complexity. Residues 318–338 (LPAALWTSSAVLGLLLLALPT) form a helical membrane-spanning segment. The Cytoplasmic segment spans residues 339 to 382 (YHLWKRCRHLAEDDTHPPASLRLLPQVSAWAGLRGTGQVGISPS).

As to quaternary structure, homodimer. Post-translationally, the Ser/Thr-rich mucin-like domain may provide possible sites for O-glycosylation. As to expression, highly expressed on high endothelial venules (HEV) and lamina propia venules found in the small intestine, and to a lesser extent in the colon and spleen. Very low levels of expression found in pancreas and brain. Not expressed in the thymus, prostate, ovaries, testis, heart, placenta, lung, liver, skeletal muscle, kidney or peripheral blood leukocytes.

The protein localises to the membrane. In terms of biological role, cell adhesion leukocyte receptor expressed by mucosal venules, helps to direct lymphocyte traffic into mucosal tissues including the Peyer patches and the intestinal lamina propria. It can bind both integrin alpha-4/beta-7 and L-selectin, regulating both the passage and retention of leukocytes. Isoform 2, lacking the mucin-like domain, may be specialized in supporting integrin alpha-4/beta-7-dependent adhesion strengthening, independent of L-selectin binding. This chain is Mucosal addressin cell adhesion molecule 1 (MADCAM1), found in Homo sapiens (Human).